The sequence spans 395 residues: HCLS1-binding protein 3 (395 aa).

At M1 the chain carries N-acetylmethionine. Residue S3 is modified to Phosphoserine. In terms of domain architecture, PX spans 19–142 (GLDLSVPQHQ…EFLGTRAPGA (124 aa)). Disordered regions lie at residues 143–310 (TGLA…KELF) and 322–374 (LGSE…AMDE). Residues 162–174 (DSDEAFDFFEQQD) show a composition bias toward acidic residues. A Phosphoserine modification is found at S191. Over residues 194–206 (GEEEEEEEEEEVL) the composition is skewed to acidic residues. Composition is skewed to basic and acidic residues over residues 249 to 260 (SDKKVSETRRPL) and 299 to 310 (RPEHGDASKELF). S254 is subject to Phosphoserine. The span at 329–339 (KPQTKPKPLVP) shows a compositional bias: pro residues. The residue at position 341 (K341) is an N6-acetyllysine.

In terms of assembly, binds HCLS1. Interacts with the SH3 domain of HCLS1 in vitro. As to expression, ubiquitously expressed.

Its function is as follows. May be a modulator of IL-2 signaling. This Mus musculus (Mouse) protein is HCLS1-binding protein 3 (Hs1bp3).